Here is a 196-residue protein sequence, read N- to C-terminus: Thymidine kinase (196 aa).

ATP contacts are provided by residues 9–16 (SAMNAGKS) and 88–91 (DEAQ). Glutamate 89 acts as the Proton acceptor in catalysis. Zn(2+) is bound by residues cysteine 146, cysteine 148, cysteine 183, and histidine 186.

The protein belongs to the thymidine kinase family. Homotetramer.

The protein resides in the cytoplasm. It catalyses the reaction thymidine + ATP = dTMP + ADP + H(+). The chain is Thymidine kinase from Coxiella burnetii (strain RSA 493 / Nine Mile phase I).